We begin with the raw amino-acid sequence, 382 residues long: Opsin Rh3 (382 aa).

The Extracellular segment spans residues methionine 1 to methionine 56. Asparagine 12 carries an N-linked (GlcNAc...) asparagine glycan. The chain crosses the membrane as a helical span at residues asparagine 57 to valine 81. Topologically, residues phenylalanine 82–asparagine 93 are cytoplasmic. A helical membrane pass occupies residues isoleucine 94 to phenylalanine 118. The Extracellular segment spans residues histidine 119 to phenylalanine 132. Residues cysteine 129 and cysteine 206 are joined by a disulfide bond. Residues glycine 133–tyrosine 152 traverse the membrane as a helical segment. Residues aspartate 153–lysine 170 are Cytoplasmic-facing. The helical transmembrane segment at alanine 171 to glycine 195 threads the bilayer. The Extracellular segment spans residues arginine 196–leucine 219. Residues phenylalanine 220 to valine 247 form a helical membrane-spanning segment. At phenylalanine 248–lysine 283 the chain is on the cytoplasmic side. Residues alanine 284–alanine 307 traverse the membrane as a helical segment. Residues phenylalanine 308–threonine 315 are Extracellular-facing. Residues proline 316–serine 340 traverse the membrane as a helical segment. At lysine 327 the chain carries N6-(retinylidene)lysine. The Cytoplasmic portion of the chain corresponds to histidine 341–alanine 382.

Belongs to the G-protein coupled receptor 1 family. Opsin subfamily. Phosphorylated on some or all of the serine and threonine residues present in the C-terminal region.

It localises to the membrane. Visual pigments are the light-absorbing molecules that mediate vision. They consist of an apoprotein, opsin, covalently linked to cis-retinal. This chain is Opsin Rh3 (Rh3), found in Drosophila pseudoobscura pseudoobscura (Fruit fly).